A 495-amino-acid polypeptide reads, in one-letter code: DNA double-strand break repair helicase HerA (495 aa).

ATP-binding positions include arginine 141, glycine 150–asparagine 155, and lysine 458–isoleucine 459.

Belongs to the HerA family. As to quaternary structure, forms a hexamer or a heptamer. Interacts with Mre11.

It catalyses the reaction Couples ATP hydrolysis with the unwinding of duplex DNA at the replication fork by translocating in the 5'-3' direction. This creates two antiparallel DNA single strands (ssDNA). The leading ssDNA polymer is the template for DNA polymerase III holoenzyme which synthesizes a continuous strand.. The catalysed reaction is ATP + H2O = ADP + phosphate + H(+). The enzyme catalyses Couples ATP hydrolysis with the unwinding of duplex DNA by translocating in the 3'-5' direction.. Its activity is regulated as follows. ATPase activity is slightly stimulated by either circular single- or double-stranded (ds)DNA with a weak preference for dsDNA. Helicase activity is stimulated by Mre11. Functionally, involved in DNA double-strand break (DSB) repair. Probably acts with NurA to stimulate resection of the 5' strand and produce the long 3' single-strand that is required for RadA loading. Has DNA-dependent ATPase activity and bidirectional DNA helicase activity. Loads on either a 3' or a 5' DNA tail for subsequent DNA unwinding. Can also unwind blunt-ended dsDNA, Holliday junction and splayed-arm DNA. The protein is DNA double-strand break repair helicase HerA of Sulfurisphaera tokodaii (strain DSM 16993 / JCM 10545 / NBRC 100140 / 7) (Sulfolobus tokodaii).